The following is a 59-amino-acid chain: uncharacterized protein (59 aa).

This is an uncharacterized protein from Acidianus hospitalis (AFV-1).